Here is a 310-residue protein sequence, read N- to C-terminus: Glycine--tRNA ligase alpha subunit (310 aa).

It belongs to the class-II aminoacyl-tRNA synthetase family. As to quaternary structure, tetramer of two alpha and two beta subunits.

Its subcellular location is the cytoplasm. The enzyme catalyses tRNA(Gly) + glycine + ATP = glycyl-tRNA(Gly) + AMP + diphosphate. The polypeptide is Glycine--tRNA ligase alpha subunit (Agrobacterium fabrum (strain C58 / ATCC 33970) (Agrobacterium tumefaciens (strain C58))).